Consider the following 344-residue polypeptide: N-acetyl-gamma-glutamyl-phosphate reductase (344 aa).

Cysteine 149 is an active-site residue.

Belongs to the NAGSA dehydrogenase family. Type 1 subfamily.

Its subcellular location is the cytoplasm. It carries out the reaction N-acetyl-L-glutamate 5-semialdehyde + phosphate + NADP(+) = N-acetyl-L-glutamyl 5-phosphate + NADPH + H(+). Its pathway is amino-acid biosynthesis; L-arginine biosynthesis; N(2)-acetyl-L-ornithine from L-glutamate: step 3/4. Its function is as follows. Catalyzes the NADPH-dependent reduction of N-acetyl-5-glutamyl phosphate to yield N-acetyl-L-glutamate 5-semialdehyde. This is N-acetyl-gamma-glutamyl-phosphate reductase from Thermoanaerobacter pseudethanolicus (strain ATCC 33223 / 39E) (Clostridium thermohydrosulfuricum).